The sequence spans 311 residues: CID domain-containing protein 1 (311 aa).

In terms of domain architecture, CID spans M1–K134. Residues M224–S256 adopt a coiled-coil conformation.

The polypeptide is CID domain-containing protein 1 (cids-1) (Caenorhabditis briggsae).